A 413-amino-acid chain; its full sequence is Argininosuccinate synthase (413 aa).

Residue 22 to 30 coordinates ATP; that stretch reads AYSGGLDTS. 2 residues coordinate L-citrulline: Tyr100 and Ser105. Residue Gly130 participates in ATP binding. 3 residues coordinate L-aspartate: Thr132, Asn136, and Asp137. Asn136 is an L-citrulline binding site. L-citrulline is bound by residues Arg140, Ser189, Ser198, Glu274, and Tyr286.

It belongs to the argininosuccinate synthase family. Type 1 subfamily. As to quaternary structure, homotetramer.

Its subcellular location is the cytoplasm. It catalyses the reaction L-citrulline + L-aspartate + ATP = 2-(N(omega)-L-arginino)succinate + AMP + diphosphate + H(+). It functions in the pathway amino-acid biosynthesis; L-arginine biosynthesis; L-arginine from L-ornithine and carbamoyl phosphate: step 2/3. In Endomicrobium trichonymphae, this protein is Argininosuccinate synthase.